The chain runs to 299 residues: S-formylglutathione hydrolase (299 aa).

Residues Met-1 and His-140 each coordinate Cu cation. Active-site charge relay system residues include Ser-161, Asp-241, and His-276.

Belongs to the esterase D family. As to quaternary structure, monomer.

It is found in the cytoplasm. It catalyses the reaction S-formylglutathione + H2O = formate + glutathione + H(+). Its function is as follows. Serine hydrolase involved in the detoxification of formaldehyde. This is S-formylglutathione hydrolase from Saccharomyces cerevisiae (strain ATCC 204508 / S288c) (Baker's yeast).